The primary structure comprises 147 residues: Large ribosomal subunit protein uL13 (147 aa).

It belongs to the universal ribosomal protein uL13 family. Part of the 50S ribosomal subunit.

Functionally, this protein is one of the early assembly proteins of the 50S ribosomal subunit, although it is not seen to bind rRNA by itself. It is important during the early stages of 50S assembly. The chain is Large ribosomal subunit protein uL13 from Mycobacteroides abscessus (strain ATCC 19977 / DSM 44196 / CCUG 20993 / CIP 104536 / JCM 13569 / NCTC 13031 / TMC 1543 / L948) (Mycobacterium abscessus).